Consider the following 221-residue polypeptide: MAYRDQSLGELAIAIPRATKLFRELNLDFCCGGKQTLSRAAGKKDLNIDELEAQLEKLAAQPSDARDWREAPLADIIAYIIPRFHDRHREQLPELILMAEKVERVHHDKADCPHGLANQLTAIYNELSQHMMKEERILFPMIGQGMGANAAAPISVMEHEHDDAGRDVEVVKELTHGVVPPEGACNTWRALYSGINEFITDLMEHIHLENNLLFPRALRGE.

Belongs to the RIC family. YtfE subfamily. As to quaternary structure, homodimer.

Its subcellular location is the cytoplasm. Di-iron-containing protein involved in the repair of iron-sulfur clusters damaged by oxidative and nitrosative stress conditions. This chain is Iron-sulfur cluster repair protein YtfE, found in Pectobacterium carotovorum subsp. carotovorum (strain PC1).